The primary structure comprises 335 residues: MNEYIKGLPKAELHLHIEGTLEPEMMIDIGKRNGVPLPYPDAEAAREAYAFKDLQSFLDIYYQAASVLLCEQDFYDLTMAYLKKARSQNVRHAEIFFDPQTHTSRGIAFDTVITGINNALRDGEQNLGITSKLIMCILRHLSQDEGLKTLEQALEYKGVIAGIGLDSSELGNPPDKFRSLYERAHKEGFLTVAHAGEEGHADYIWQALNTLHVARIDHGVHCMEDETLIHTLVERQIPLTVCPLSNVRLGVFSSMEEHNLKKMLDRELSVTVNSDDPAYFGGYVNENYLAVQQALTLERKDLVRLAVNSFTASFLTQEKKQQHIAAIHTFDKNIT.

Histidine 14, histidine 16, and histidine 194 together coordinate Zn(2+). Catalysis depends on glutamate 197, which acts as the Proton donor. Aspartate 275 contributes to the Zn(2+) binding site. Aspartate 276 contacts substrate.

The protein belongs to the metallo-dependent hydrolases superfamily. Adenosine and AMP deaminases family. Adenine deaminase type 2 subfamily. Zn(2+) is required as a cofactor.

The enzyme catalyses adenine + H2O + H(+) = hypoxanthine + NH4(+). Functionally, catalyzes the hydrolytic deamination of adenine to hypoxanthine. Plays an important role in the purine salvage pathway and in nitrogen catabolism. This Chlorobium phaeobacteroides (strain BS1) protein is Adenine deaminase.